The following is a 285-amino-acid chain: uncharacterized protein (285 aa).

The N-terminal stretch at 1-25 (MVKKWLIQFAVMLSVLSTFTYSASA) is a signal peptide.

This is an uncharacterized protein from Bacillus subtilis (strain 168).